Here is a 422-residue protein sequence, read N- to C-terminus: Histidinol dehydrogenase (422 aa).

NAD(+) contacts are provided by Tyr-123, Gln-183, and Asn-206. Positions 229, 251, and 254 each coordinate substrate. Zn(2+) contacts are provided by Gln-251 and His-254. Catalysis depends on proton acceptor residues Glu-320 and His-321. Substrate-binding residues include His-321, Asp-354, Glu-408, and His-413. Asp-354 is a Zn(2+) binding site. Zn(2+) is bound at residue His-413.

The protein belongs to the histidinol dehydrogenase family. The cofactor is Zn(2+).

It carries out the reaction L-histidinol + 2 NAD(+) + H2O = L-histidine + 2 NADH + 3 H(+). The protein operates within amino-acid biosynthesis; L-histidine biosynthesis; L-histidine from 5-phospho-alpha-D-ribose 1-diphosphate: step 9/9. Its function is as follows. Catalyzes the sequential NAD-dependent oxidations of L-histidinol to L-histidinaldehyde and then to L-histidine. This is Histidinol dehydrogenase from Natronomonas pharaonis (strain ATCC 35678 / DSM 2160 / CIP 103997 / JCM 8858 / NBRC 14720 / NCIMB 2260 / Gabara) (Halobacterium pharaonis).